The sequence spans 146 residues: 3-hydroxyacyl-[acyl-carrier-protein] dehydratase FabZ (146 aa).

Histidine 49 is an active-site residue.

This sequence belongs to the thioester dehydratase family. FabZ subfamily.

The protein localises to the cytoplasm. The catalysed reaction is a (3R)-hydroxyacyl-[ACP] = a (2E)-enoyl-[ACP] + H2O. Involved in unsaturated fatty acids biosynthesis. Catalyzes the dehydration of short chain beta-hydroxyacyl-ACPs and long chain saturated and unsaturated beta-hydroxyacyl-ACPs. The protein is 3-hydroxyacyl-[acyl-carrier-protein] dehydratase FabZ of Pseudomonas entomophila (strain L48).